Consider the following 240-residue polypeptide: Vacuolar-sorting protein SNF7 (240 aa).

Threonine 72 is subject to Phosphothreonine. A phosphoserine mark is found at serine 119 and serine 193. The disordered stretch occupies residues 193-240 (SENKVSLPSVPSNKIKQSENSVKDGEEEEDEEDEDEKALRELQAEMGL). Positions 195 to 212 (NKVSLPSVPSNKIKQSEN) are enriched in polar residues. The segment covering 217-228 (GEEEEDEEDEDE) has biased composition (acidic residues). Lysine 229 participates in a covalent cross-link: Glycyl lysine isopeptide (Lys-Gly) (interchain with G-Cter in ubiquitin). The span at 229-240 (KALRELQAEMGL) shows a compositional bias: basic and acidic residues.

Belongs to the SNF7 family. Core component of the ESCRT-III complex (endosomal sorting required for transport complex III). ESCRT-III appears to be sequentially assembled as a flat lattice on the endosome membrane and forms a transient 450 kDa complex that contains DID4, oligomerized SNF7, VPS20 and VPS24. SNF7 polymerizes into spirals at the surface of lipid bilayers. SNF7 polymerization is nucleated by association of SNF7 with VPS20; the process is terminated through association of VPS24, possibly by capping the SNF7 filament. Interacts with VTA1; the interaction requires DID2. Interacts with BRO1. Interacts with DOA4. Interacts with HEH1 and HEH2. Interacts with RIM20 and YGR122W.

The protein localises to the cytoplasm. The protein resides in the endosome membrane. It localises to the nucleus envelope. Its function is as follows. Acts a component of the ESCRT-III complex required for the sorting and concentration of proteins resulting in the entry of these proteins into the invaginating vesicles of the multivesicular body (MVB). The sequential action of ESCRT-0, -I, and -II together with the ordered assembly of ESCRT-III links membrane invagination to cargo sorting. Membrane scission in the neck of the growing vesicle releases mature, cargo-laden ILVs into the lumen. ESCRT-III is critical for late steps in MVB sorting, such as membrane invagination and final cargo sorting and recruitment of late-acting components of the sorting machinery. SNF7 is the most abundant ESCRT-III subunit which forms membrane-sculpting filaments with 30 Angstrom periodicity and a exposed cationic membrane-binding surface. Its activation requires a prominent conformational rearrangement to expose protein-membrane and protein-protein interfaces. SNF7 filaments then form spirals that could function as spiral springs. The elastic expansion of compressed SNF7 spirals generates an area difference between the two sides of the membrane and thus curvature which could be the origin of membrane deformation leading eventually to fission. SNF7 recruits BRO1, which in turn recruits DOA4, which deubiquitinates cargos before their enclosure within MVB vesicles. ESCRT-III is also recruited to the nuclear envelope (NE) by integral INM proteins to surveil and clear defective nuclear pore complex (NPC) assembly intermediates to ensure the fidelity of NPC assembly. This chain is Vacuolar-sorting protein SNF7, found in Saccharomyces cerevisiae (strain ATCC 204508 / S288c) (Baker's yeast).